The sequence spans 533 residues: Histone-arginine methyltransferase CARMER (533 aa).

An SAM-dependent MTase PRMT-type domain is found at 143 to 452; the sequence is ASQYFQFYGY…QSYDVTIDLH (310 aa). S-adenosyl-L-methionine-binding residues include glutamine 156, arginine 165, glycine 189, glutamate 211, glutamate 240, and threonine 268. Arginine 503 is subject to Asymmetric dimethylarginine; by autocatalysis.

Belongs to the class I-like SAM-binding methyltransferase superfamily. Protein arginine N-methyltransferase family. In terms of assembly, homodimer. In terms of processing, the dimethylated protein is the major form.

It localises to the cytoplasm. The protein resides in the nucleus. The catalysed reaction is L-arginyl-[protein] + 2 S-adenosyl-L-methionine = N(omega),N(omega)-dimethyl-L-arginyl-[protein] + 2 S-adenosyl-L-homocysteine + 2 H(+). In terms of biological role, methylates (mono- and asymmetric dimethylation) the guanidino nitrogens of arginyl residues in proteins. May methylate histone H3 at 'Arg-17' and activate transcription via chromatin remodeling. The sequence is that of Histone-arginine methyltransferase CARMER (Art4) from Drosophila willistoni (Fruit fly).